The primary structure comprises 927 residues: MEADGQSWAGESVSGPGPGGGGMIRELCRGFSRYRRYLGRLRQNLRETQKFFRDIKCSHSHSCPSSPAGGGAAELGPAGDVAEAPLPAGQLSCISFPPMEETYLQQLVDRLPCILILGQDCNAKCQLLNLLLGVQVLPTLKLDSDESCKLRRLRFTYGTRTRVSLALPGQYELVHTLASHQDNWETIPEEDLEVQEDSEDAAHVLADLEVTMHHALLQEVDIVVAPCPSHRPSVDVLSDLANDFLPVITYALHKDELSERGEQELREVRQYFSFPMFFFKVPKLEIISSSSGRAESERSPLYGQLVDLGYLSSSHRNCVPSDQDCKAQSMLVEQSEKLKQLSTFSHQLLQNRLVDAAKALNVVHSHCLDIFINQAFDMQRDLQITPKRLEYTRKKENELYESLMNIANRKQEEMKDMIVETLNTMKEELLDDAANMEFKDVIVPENGETIGTREIKSCIRQIQELIISRLNQAVANKLISSVDYLRESFVGTLERCLQSLEKSQDVSVHITSNYLKQILNAAYHVEVTFHSGSSVTRMLWEQIKQIIQRITWVNPPTITLEWKRKVAQEAIDSLSASKLAKSICSQFRTRLNSSHEAFAASLRQLEAGHSGRLEKTEDLWLKVRKDHAPRLARLSLESRSLQDVLLHRKPKLGQELGRGQYGVVYLCDNWGGHFPCALKSVVPPDEKHWNDLALEFHYMRSLPKHERLVDLHGSVIDYNYGGGSSVAVLLIMERLHRDLYTGLKAGLTLETRLQIALDVVEGIRFLHSQGLVHRDIKLKNVLLDKQNRAKITDLGFCKPEAMMSGSIVGTPIHMAPELFTGKYDNSVDVYAFGILFWYICSGSIKLPEAFERCASKDHLWNNVRRGTRPERLPVFDEECWQLMEACWDGDPLKRPLLGIVQPMLRSIMDRLCKCSSEQPNRGLDDST.

Residues 1–21 form a disordered region; sequence MEADGQSWAGESVSGPGPGGG. Positions 393–429 form a coiled coil; that stretch reads RKKENELYESLMNIANRKQEEMKDMIVETLNTMKEEL. Residues 650 to 904 form the Protein kinase domain; the sequence is PKLGQELGRG…PLLGIVQPML (255 aa). ATP is bound by residues 656–664 and Lys679; that span reads LGRGQYGVV. The active-site Proton acceptor is Asp775.

Belongs to the protein kinase superfamily. Ser/Thr protein kinase family. In terms of tissue distribution, expressed in brain, heart, skeletal muscle, kidney and lung. Expressed in maturing tubular epithelia, with the most prominent expression in the medulla and the papilla. Expressed in thin ascending limb of the loop of Henle and the distal convoluted tubule. Expressed in all layers of transitional ureteric epithelium and in the ureteric smooth-muscle cells (at protein level). Widely expressed. Highly expressed in many brain regions, including in cerebellum, olfactory, hippocampus and cerebral cortex.

Its subcellular location is the cytoplasm. The protein localises to the cell membrane. It localises to the apical cell membrane. The protein resides in the basolateral cell membrane. It is found in the cell junction. The catalysed reaction is L-seryl-[protein] + ATP = O-phospho-L-seryl-[protein] + ADP + H(+). The enzyme catalyses L-threonyl-[protein] + ATP = O-phospho-L-threonyl-[protein] + ADP + H(+). It carries out the reaction L-tyrosyl-[protein] + ATP = O-phospho-L-tyrosyl-[protein] + ADP + H(+). Acts as a positive regulator of ERK phosphorylation downstream of fibroblast growth factor-receptor activation. Involved in the regulation of both caspase-dependent apoptosis and caspase-independent cell death. In the skin, it plays a predominant role in suppressing caspase-dependent apoptosis in response to UV stress in a range of dermal cell types. The sequence is that of Dual serine/threonine and tyrosine protein kinase (Dstyk) from Mus musculus (Mouse).